Consider the following 108-residue polypeptide: Iron-sulfur cluster assembly protein CyaY (108 aa).

Belongs to the frataxin family.

In terms of biological role, involved in iron-sulfur (Fe-S) cluster assembly. May act as a regulator of Fe-S biogenesis. In Pseudomonas paraeruginosa (strain DSM 24068 / PA7) (Pseudomonas aeruginosa (strain PA7)), this protein is Iron-sulfur cluster assembly protein CyaY.